The primary structure comprises 519 residues: Fatty acid--[acyl-carrier-protein] ligase ScoC (519 aa).

Residue Thr-167 coordinates Mg(2+). ATP-binding residues include Ile-216 and Thr-312. Mg(2+) is bound at residue Glu-313. ATP-binding residues include Asp-394 and Lys-411.

This sequence belongs to the ATP-dependent AMP-binding enzyme family. Mg(2+) is required as a cofactor.

It carries out the reaction a medium-chain fatty acid + holo-[ACP] + ATP = a medium-chain fatty acyl-[ACP] + AMP + diphosphate. The enzyme catalyses a medium-chain fatty acid + ATP + H(+) = a medium-chain fatty acyl-AMP + diphosphate. The catalysed reaction is a medium-chain fatty acyl-AMP + holo-[ACP] = a medium-chain fatty acyl-[ACP] + AMP + H(+). It catalyses the reaction octanoate + holo-[ACP] + ATP = octanoyl-[ACP] + AMP + diphosphate. It carries out the reaction octanoate + ATP + H(+) = octanoyl-AMP + diphosphate. The enzyme catalyses octanoyl-AMP + holo-[ACP] = octanoyl-[ACP] + AMP + H(+). The catalysed reaction is a (2E)-enoyl fatty acid + holo-[ACP] + ATP = a (2E)-enoyl-[ACP] + AMP + diphosphate. It catalyses the reaction a (2E)-enoyl fatty acid + ATP + H(+) = a (2E)-2-fatty-enoyl-AMP + diphosphate. It carries out the reaction a (2E)-2-fatty-enoyl-AMP + holo-[ACP] = a (2E)-enoyl-[ACP] + AMP + H(+). The enzyme catalyses (2E)-2-butenoate + holo-[ACP] + ATP = (2E)-butenoyl-[ACP] + AMP + diphosphate. The catalysed reaction is (2E)-2-butenoate + ATP + H(+) = (2E)-but-2-enoyl-AMP + diphosphate. It catalyses the reaction (2E)-but-2-enoyl-AMP + holo-[ACP] = (2E)-butenoyl-[ACP] + AMP + H(+). It carries out the reaction a (3R)-3-isocyanyl-fatty acid + holo-[ACP] + ATP = a (3R)-3-isocyanyl-fatty acyl-[ACP] + AMP + diphosphate. The enzyme catalyses a (3R)-3-isocyanyl-fatty acid + ATP + H(+) = a (3R)-3-isocyanyl-fatty acyl-AMP + diphosphate. The catalysed reaction is a (3R)-3-isocyanyl-fatty acyl-AMP + holo-[ACP] = a (3R)-3-isocyanyl-fatty acyl-[ACP] + AMP + H(+). It catalyses the reaction (3R)-3-isocyanylbutanoate + holo-[ACP] + ATP = (3R)-3-isocyanylbutanoyl-[ACP] + AMP + diphosphate. It carries out the reaction (3R)-3-isocyanylbutanoate + ATP + H(+) = (3R)-3-isocyanylbutanoyl-AMP + diphosphate. The enzyme catalyses (3R)-3-isocyanylbutanoyl-AMP + holo-[ACP] = (3R)-3-isocyanylbutanoyl-[ACP] + AMP + H(+). In terms of biological role, acyl:acyl-carrier protein ligase involved in the biosynthesis of a unique class of isonitrile lipopeptides (INLPs). Shows a strong preference for fatty acids with a short/medium-chain length (C4-C8) in vitro, and accepts alpha,beta-unsaturated fatty acids such as crotonate, which seems to be a physiological substrate. Acts twice during the INLP pathway, catalyzing the activation of crotonate ((2E)-2-butenoate) as well as (3R)-3-isocyanylbutanoate as acyl-adenylates (acyl-AMP), and then the acyl transfer to the dedicated acyl-carrier protein ScoB. The sequence is that of Fatty acid--[acyl-carrier-protein] ligase ScoC from Streptomyces coeruleorubidus.